The chain runs to 342 residues: Palmitoyltransferase PFA4 (342 aa).

The Cytoplasmic segment spans residues 1–8 (MITFSNPW). A helical transmembrane segment spans residues 9–29 (IGVIIPCIIIFTLSTFSAIYI). At 30–38 (LPHHVSNNE) the chain is on the lumenal side. Residues 39–59 (LTLFICASAMVWISYIIAIIV) form a helical membrane-spanning segment. The Cytoplasmic segment spans residues 60-124 (PPGSPPKNYT…GHRNMPHFMR (65 aa)). The region spanning 77-127 (MYCLKCKAYKPERTHHSKALGVCVLKMDHHCPWTNNTVGHRNMPHFMRFLV) is the DHHC domain. Residue Cys107 is the S-palmitoyl cysteine intermediate of the active site. The chain crosses the membrane as a helical span at residues 125–145 (FLVWVDMTVGYLFIRLCIRIM). Over 146-162 (KLWRDKHLPSYLFDKTE) the chain is Lumenal. The helical transmembrane segment at 163–183 (VILSIVFLPASFFVLFTVGIL) threads the bilayer. Over 184–342 (TIRVFVNMCN…ADFGVEHTDI (159 aa)) the chain is Cytoplasmic.

This sequence belongs to the DHHC palmitoyltransferase family. PFA4 subfamily.

It is found in the endoplasmic reticulum membrane. It catalyses the reaction L-cysteinyl-[protein] + hexadecanoyl-CoA = S-hexadecanoyl-L-cysteinyl-[protein] + CoA. In terms of biological role, mediates the reversible addition of palmitate to target proteins, thereby regulating their membrane association and biological function. The protein is Palmitoyltransferase PFA4 of Yarrowia lipolytica (strain CLIB 122 / E 150) (Yeast).